We begin with the raw amino-acid sequence, 255 residues long: 14-3-3 protein 5 (255 aa).

Belongs to the 14-3-3 family. In terms of assembly, homodimer.

This is 14-3-3 protein 5 (TFT5) from Solanum lycopersicum (Tomato).